Here is a 309-residue protein sequence, read N- to C-terminus: Thioesterase lcsJ (309 aa).

Residues 11–31 traverse the membrane as a helical segment; that stretch reads IAQVHGFVFSWWGVILLLAII. The disordered stretch occupies residues 61 to 83; sequence ASPTAENAQRRVPKTPKTGATDT. N112 carries an N-linked (GlcNAc...) asparagine glycan. The interval 239–275 is disordered; it reads SGWIPPRPESTGNSKSLDSLQANGHGATENGKHDAKD. A compositionally biased stretch (polar residues) spans 248–260; sequence STGNSKSLDSLQA.

This sequence belongs to the lcsJ thioesterase family.

It localises to the membrane. It functions in the pathway secondary metabolite biosynthesis. In terms of biological role, thioesterase; part of the gene cluster that mediates the biosynthesis of the lipopeptide antibiotics leucinostatins that show extensive biological activities, including antimalarial, antiviral, antibacterial, antifungal, and antitumor activities, as well as phytotoxic. Leucinostatin A contains nine amino acid residues, including the unusual amino acid 4-methyl-L-proline (MePro), 2-amino-6-hydroxy-4-methyl-8-oxodecanoic acid (AHyMeOA), 3-hydroxyleucine (HyLeu), alpha-aminoisobutyric acid (AIB), beta-Ala, a 4-methylhex-2-enoic acid at the N-terminus as well as a N1,N1-dimethylpropane-1,2-diamine (DPD) at the C-terminus. The biosynthesis of leucinostatins is probably initiated with the assembly of 4-methylhex-2-enoic acid by a reducing PKS. Two reducing polyketide synthases, lcsB and lcsC, have been identified in the cluster and it is not clear which is the one that assembles 4-methylhex-2-enoic acid since both contain KS, AT, DH, cMT, ER, KR and ACP domains. The polyketide residue might be transferred to the NRPS lcsA, mediated by two additional enzymes, the acyl-CoA ligase lcsD and the thioesterase lcsE. The linear polyketide carboxylic acid, which is released from PKS, is converted to a CoA thioester by lcsD, and then lcsE hydrolyzes the thiol bond and shuttles the polyketide intermediate to lcsA. The C domain of the first module catalyzed the condensation of 4-methylhex-2-enoic acid and MePro carried by domain A1, followed by successive condensations of nine amino acids to trigger the elongation of the linear peptide. A5 and A6 domains of lcsA are proposed to incorporate leucine, A2 AHyMeOA, and A3 incorporates HyLeu. A4, A7 and A8 incorporate AIB. The AHyMeOA in leucinostatin A activated by the A2 might be produced by the second PKS (lcsB or lcsC) present within the cluster. The MePro is probably produced via leucine cyclization and may originate from a separate pathway, independent of the cluster. Another nonproteinogenic amino acid, beta-Ala, could be produced by an aspartic acid decarboxylase also localized outside of the cluster. Two candidates are VFPBJ_01400 and VFPBJ_10476. The final peptide scaffold may be released by the NAD(P)H-dependent thioester reductase (TE) at the C-terminal region of lcsA. Transamination of the lcsA product by the transaminase lcsP may produce DPD at the C-terminus. Further hydroxylation steps performed alternatively by the cytochrome P450 monooxygenases lcsI, lcsK and lcsN then yield the non-methylated leucinostatins precursor. It is also possible that leucines can be hydroxylated prior to their incorporation into the peptide. Varying extents of methylation then lead to the formation of leucinostatins A and B. The chain is Thioesterase lcsJ from Purpureocillium lilacinum (Paecilomyces lilacinus).